The following is a 305-amino-acid chain: NADH-cytochrome b5 reductase 1 (305 aa).

The helical transmembrane segment at 8–28 threads the bilayer; that stretch reads VLLASLGVGLLTLLGVALGAY. The 113-residue stretch at 44–156 folds into the FAD-binding FR-type domain; that stretch reads NEKYQLRLLD…RGPSGLLTYA (113 aa). Residues 136–166 and 175–210 each bind FAD; these read DSLK…IQPN and VARN…QCFL.

Belongs to the flavoprotein pyridine nucleotide cytochrome reductase family. The cofactor is FAD.

The protein localises to the membrane. It carries out the reaction 2 Fe(III)-[cytochrome b5] + NADH = 2 Fe(II)-[cytochrome b5] + NAD(+) + H(+). In terms of biological role, NADH-cytochrome b5 reductases are involved in desaturation and elongation of fatty acids, cholesterol biosynthesis, drug metabolism, and, in erythrocyte, methemoglobin reduction. This Bos taurus (Bovine) protein is NADH-cytochrome b5 reductase 1 (CYB5R1).